A 440-amino-acid polypeptide reads, in one-letter code: MKETPLSNCERRFLLRAIEEKKRLDGRQTYDYRNIKISFGTDYGCCIVELGKTRVLGQVSCELVSPKLNRATEGILFFNLELSQMAAPAFEPGRQSDLLVKLNRLLERCLRNSKCIDTESLCVVAGEKVWQIRVDLHLLNHDGNIIDAASIAAIVALCHFRRPDVSVQGDEVTLYTLEERDPVPLSIHHMPICVSFAFFQQGTYLLVDPSEREERVMDGLLVIAMNKHREICTIQSSGGIMLLKDQVLRCSKIAGVKVVEITELIQKALENDQKVRKEGGKFGFVESMANQRITAFKMEKAPIDTSDVEEKAEEIISEAEPPSEVVSKPVLWTPGTAQIGEGIENSWGHLEDSEKEDEDEGGSDEAIILDGMKMDTGVEVSNIGSQDAPIVLSDSEEEEMIILEPDKNPKKIRTQTISATQVKAPSKKPVKKRKKKRAAN.

Serine 65 is subject to Phosphoserine. Lysine 297 is subject to N6-acetyllysine; alternate. Lysine 297 is covalently cross-linked (Glycyl lysine isopeptide (Lys-Gly) (interchain with G-Cter in SUMO1); alternate). Lysine 297 is covalently cross-linked (Glycyl lysine isopeptide (Lys-Gly) (interchain with G-Cter in SUMO2); alternate). Residues serine 306 and serine 346 each carry the phosphoserine modification. The segment at glutamate 341 to glycine 362 is disordered. Positions serine 353–glycine 362 are enriched in acidic residues. 2 positions are modified to phosphoserine: serine 393 and serine 395. A disordered region spans residues glutamate 404 to asparagine 440. The segment covering proline 425 to asparagine 440 has biased composition (basic residues).

Belongs to the RNase PH family. As to quaternary structure, component of the RNA exosome core complex (Exo-9), composed of EXOSC1, EXOSC2, EXOSC3, EXOSC4, EXOSC5, EXOSC6, EXOSC7, EXOSC8 and EXOSC9; within the complex interacts with EXOSC3, EXOSC4, EXOSC5 and DIS3. The catalytically inactive RNA exosome core complex (Exo-9) associates with the catalytic subunit EXOSC10/RRP6. Exo-9 may associate with DIS3 to form the nucleolar exosome complex, or DIS3L to form the cytoplasmic exosome complex. Exo-9 is formed by a hexameric base ring consisting of the heterodimers EXOSC4-EXOSC9, EXOSC5-EXOSC8 and EXOSC6-EXOSC7, and a cap ring consisting of EXOSC1, EXOSC2 and EXOSC3. The RNA exosome complex associates with cofactors C1D/RRP47, MPHOSPH6/MPP6 and MTREX/MTR4. Interacts (via C-terminus region) with SETX (via N-terminus domain); the interaction enhances SETX sumoylation. Interacts with DIS3; the interaction is direct.

The protein localises to the cytoplasm. It is found in the nucleus. Its subcellular location is the nucleolus. The protein resides in the nucleoplasm. Non-catalytic component of the RNA exosome complex which has 3'-&gt;5' exoribonuclease activity and participates in a multitude of cellular RNA processing and degradation events. In the nucleus, the RNA exosome complex is involved in proper maturation of stable RNA species such as rRNA, snRNA and snoRNA, in the elimination of RNA processing by-products and non-coding 'pervasive' transcripts, such as antisense RNA species and promoter-upstream transcripts (PROMPTs), and of mRNAs with processing defects, thereby limiting or excluding their export to the cytoplasm. The RNA exosome may be involved in Ig class switch recombination (CSR) and/or Ig variable region somatic hypermutation (SHM) by targeting AICDA deamination activity to transcribed dsDNA substrates. In the cytoplasm, the RNA exosome complex is involved in general mRNA turnover and specifically degrades inherently unstable mRNAs containing AU-rich elements (AREs) within their 3' untranslated regions, and in RNA surveillance pathways, preventing translation of aberrant mRNAs. It seems to be involved in degradation of histone mRNA. The catalytic inactive RNA exosome core complex of 9 subunits (Exo-9) is proposed to play a pivotal role in the binding and presentation of RNA for ribonucleolysis, and to serve as a scaffold for the association with catalytic subunits and accessory proteins or complexes. EXOSC9 binds to ARE-containing RNAs. The protein is Exosome complex component RRP45 (EXOSC9) of Bos taurus (Bovine).